The following is an 88-amino-acid chain: HssA/B-like protein 64 (88 aa).

A compositionally biased stretch (low complexity) spans methionine 1–phenylalanine 24. Disordered regions lie at residues methionine 1–glycine 25 and glycine 45–cysteine 88. The span at alanine 56 to glycine 66 shows a compositional bias: gly residues.

Belongs to the hssA/B family.

This Dictyostelium discoideum (Social amoeba) protein is HssA/B-like protein 64 (hssl64).